Reading from the N-terminus, the 77-residue chain is Small ribosomal subunit protein bS21 (77 aa).

The protein belongs to the bacterial ribosomal protein bS21 family.

The chain is Small ribosomal subunit protein bS21 from Methylococcus capsulatus (strain ATCC 33009 / NCIMB 11132 / Bath).